The chain runs to 572 residues: Galectin-3-binding protein B (572 aa).

Positions 1 to 14 (MLLLWPLLFLQVSA) are cleaved as a signal peptide. In terms of domain architecture, SRCR spans 32–131 (VRLVGVIPSS…HKEDAGVICA (100 aa)). 3 disulfides stabilise this stretch: C56–C120, C69–C130, and C100–C110. Residues N135, N195, and N202 are each glycosylated (N-linked (GlcNAc...) asparagine). The region spanning 164-231 (CDFTIAVRDL…LYTRQIDVST (68 aa)) is the BTB domain. Residues 270 to 372 (QVSMYEYGVR…IPVDKLYDIQ (103 aa)) form the BACK domain. 2 N-linked (GlcNAc...) asparagine glycosylation sites follow: N430 and N548.

Its subcellular location is the secreted. The protein resides in the extracellular space. The protein localises to the extracellular matrix. Functionally, promotes integrin-mediated cell adhesion. The sequence is that of Galectin-3-binding protein B (lgals3bpb) from Danio rerio (Zebrafish).